The primary structure comprises 79 residues: Acyl carrier protein (79 aa).

The Carrier domain occupies glutamate 2–leucine 77. An O-(pantetheine 4'-phosphoryl)serine modification is found at serine 37.

The protein belongs to the acyl carrier protein (ACP) family. In terms of processing, 4'-phosphopantetheine is transferred from CoA to a specific serine of apo-ACP by AcpS. This modification is essential for activity because fatty acids are bound in thioester linkage to the sulfhydryl of the prosthetic group.

The protein localises to the cytoplasm. It functions in the pathway lipid metabolism; fatty acid biosynthesis. Its function is as follows. Carrier of the growing fatty acid chain in fatty acid biosynthesis. The sequence is that of Acyl carrier protein from Laribacter hongkongensis (strain HLHK9).